A 128-amino-acid polypeptide reads, in one-letter code: uncharacterized protein (128 aa).

In terms of domain architecture, HTH hxlR-type spans 18–116; sequence CPVETTLDII…WGEKYKDRID (99 aa).

This is an uncharacterized protein from Bacillus subtilis (strain 168).